The primary structure comprises 73 residues: UPF0154 protein BCG9842_B1526 (73 aa).

The chain crosses the membrane as a helical span at residues 3 to 23; sequence IWLGILVGVVALVAGVALGFF.

The protein belongs to the UPF0154 family.

It localises to the cell membrane. This Bacillus cereus (strain G9842) protein is UPF0154 protein BCG9842_B1526.